The primary structure comprises 202 residues: 3-isopropylmalate dehydratase small subunit (202 aa).

It belongs to the LeuD family. LeuD type 1 subfamily. As to quaternary structure, heterodimer of LeuC and LeuD.

It carries out the reaction (2R,3S)-3-isopropylmalate = (2S)-2-isopropylmalate. It functions in the pathway amino-acid biosynthesis; L-leucine biosynthesis; L-leucine from 3-methyl-2-oxobutanoate: step 2/4. Functionally, catalyzes the isomerization between 2-isopropylmalate and 3-isopropylmalate, via the formation of 2-isopropylmaleate. This Rhizobium rhizogenes (strain K84 / ATCC BAA-868) (Agrobacterium radiobacter) protein is 3-isopropylmalate dehydratase small subunit.